The following is a 37-amino-acid chain: Large ribosomal subunit protein bL36 (37 aa).

It belongs to the bacterial ribosomal protein bL36 family.

In Syntrophomonas wolfei subsp. wolfei (strain DSM 2245B / Goettingen), this protein is Large ribosomal subunit protein bL36.